The chain runs to 378 residues: Anhydro-N-acetylmuramic acid kinase (378 aa).

An ATP-binding site is contributed by 9–16 (GTSADGID).

The protein belongs to the anhydro-N-acetylmuramic acid kinase family.

It carries out the reaction 1,6-anhydro-N-acetyl-beta-muramate + ATP + H2O = N-acetyl-D-muramate 6-phosphate + ADP + H(+). It functions in the pathway amino-sugar metabolism; 1,6-anhydro-N-acetylmuramate degradation. It participates in cell wall biogenesis; peptidoglycan recycling. Its function is as follows. Catalyzes the specific phosphorylation of 1,6-anhydro-N-acetylmuramic acid (anhMurNAc) with the simultaneous cleavage of the 1,6-anhydro ring, generating MurNAc-6-P. Is required for the utilization of anhMurNAc either imported from the medium or derived from its own cell wall murein, and thus plays a role in cell wall recycling. In Synechococcus sp. (strain ATCC 27144 / PCC 6301 / SAUG 1402/1) (Anacystis nidulans), this protein is Anhydro-N-acetylmuramic acid kinase.